The chain runs to 628 residues: Glutamine--fructose-6-phosphate aminotransferase [isomerizing] (628 aa).

Cys-2 serves as the catalytic Nucleophile; for GATase activity. The Glutamine amidotransferase type-2 domain maps to 2–229; sequence CGIVGYVGHR…QDQAVVLTAD (228 aa). The disordered stretch occupies residues 61 to 94; that stretch reads ETDSNDGDGLGGSTGLGHTRWATHGRPTDRNAHP. 2 SIS domains span residues 301-440 and 473-618; these read SDQE…ARGT and LAER…VDKP. The For Fru-6P isomerization activity role is filled by Lys-623.

As to quaternary structure, homodimer.

The protein localises to the cytoplasm. The enzyme catalyses D-fructose 6-phosphate + L-glutamine = D-glucosamine 6-phosphate + L-glutamate. Functionally, catalyzes the first step in hexosamine metabolism, converting fructose-6P into glucosamine-6P using glutamine as a nitrogen source. The chain is Glutamine--fructose-6-phosphate aminotransferase [isomerizing] from Mycolicibacterium smegmatis (strain ATCC 700084 / mc(2)155) (Mycobacterium smegmatis).